A 118-amino-acid polypeptide reads, in one-letter code: uncharacterized protein (118 aa).

Helical transmembrane passes span 5–25 (AFFNLIACVLFPTPLIPSMVI) and 40–57 (FLTFLTNLFLYNIVQHYI).

The protein localises to the membrane. This is an uncharacterized protein from African swine fever virus (strain Badajoz 1971 Vero-adapted) (Ba71V).